Reading from the N-terminus, the 334-residue chain is Adenine deaminase (334 aa).

Zn(2+)-binding residues include H17, H19, and H197. E200 (proton donor) is an active-site residue. Position 278 (D278) interacts with Zn(2+). D279 contributes to the substrate binding site.

Belongs to the metallo-dependent hydrolases superfamily. Adenosine and AMP deaminases family. Adenine deaminase type 2 subfamily. Requires Zn(2+) as cofactor.

The catalysed reaction is adenine + H2O + H(+) = hypoxanthine + NH4(+). Catalyzes the hydrolytic deamination of adenine to hypoxanthine. Plays an important role in the purine salvage pathway and in nitrogen catabolism. In Rhodospirillum rubrum (strain ATCC 11170 / ATH 1.1.1 / DSM 467 / LMG 4362 / NCIMB 8255 / S1), this protein is Adenine deaminase.